A 593-amino-acid chain; its full sequence is Mitoguardin 2 (593 aa).

2 consecutive transmembrane segments (helical) span residues 11-31 and 42-62; these read MIQA…TTFG and PGLR…ALAA. Disordered regions lie at residues 98-134, 150-171, and 197-229; these read PSVK…HSGS, TAAC…TTDG, and VGQR…PESQ. 2 stretches are compositionally biased toward low complexity: residues 106-116 and 124-134; these read SRRVQSPSSKS and SSIEPSKHSGS. Phosphoserine is present on serine 132. Residues 205–218 are compositionally biased toward polar residues; that stretch reads STPTPGDSLQNPDT. Residue threonine 206 is modified to Phosphothreonine. Phosphoserine occurs at positions 220, 224, and 228. Residue threonine 273 is modified to Phosphothreonine. 2 positions are modified to phosphoserine: serine 276 and serine 295. The short motif at 292–298 is the FFAT element; it reads SFFSATE.

It belongs to the mitoguardin family. Homodimer and heterodimer; forms heterodimers with MIGA1. Interacts with PLD6/MitoPLD. Interacts (via phosphorylated FFAT motif) with MOSPD2. Phosphorylation at Ser-295 of the FFAT motif activates interaction with MOSPD2.

It is found in the mitochondrion outer membrane. In terms of biological role, regulator of mitochondrial fusion. Acts by forming homo- and heterodimers at the mitochondrial outer membrane and facilitating the formation of PLD6/MitoPLD dimers. May act by regulating phospholipid metabolism via PLD6/MitoPLD. This is Mitoguardin 2 from Mus musculus (Mouse).